Reading from the N-terminus, the 990-residue chain is Fibronectin-binding protein A (990 aa).

Residues 1–35 (MKNNLRYGIRKHKLGAASVFLGTMIVVGMGQDKEA) form the signal peptide. The YSIRK-G/S signaling motif signature appears at 7–18 (YGIRKHKLGAAS). 2 disordered regions span residues 33 to 61 (KEAATSEQKTTTVEENGNSATDNKVSETQ) and 96 to 193 (PKAV…TEVK). Residues 37 to 55 (TSEQKTTTVEENGNSATDN) show a composition bias toward polar residues. The ligand-binding A region stretch occupies residues 37 to 511 (TSEQKTTTVE…SNKADGNGKN (475 aa)). Basic and acidic residues-rich tracts occupy residues 112–126 (TVKEEVVKEEEKPQV) and 179–193 (DVAEAKEASDVTEVK). Residues 194-511 (GTDVTSKVTV…SNKADGNGKN (318 aa)) form a fibrinogen/elastin/tropoelastin-binding region. A fibronectin-binding region spans residues 512-834 (GQIIQNNDFE…EGQQTIEEDT (323 aa)). The stretch at 545–574 (ENQDNTPLDIDYHTAIDGEGGYADGYIETI) is one B-1 repeat. Residues 545–604 (ENQDNTPLDIDYHTAIDGEGGYADGYIETIEETDSSAIDIDYHTAVDSEAGHVGGYTESS) are 2 X approximate tandem repeats. One copy of the B-2 repeat lies at 575–604 (EETDSSAIDIDYHTAVDSEAGHVGGYTESS). The segment at 702–969 (LGYEGGQNSG…EESTNKGMLF (268 aa)) is disordered. The D-1 repeat unit spans residues 707 to 744 (GQNSGNQSFEEDTEEDKPKYEQGGNIVDIDFDSVPQIQ). The tract at residues 707–850 (GQNSGNQSFE…TPEVPSEPET (144 aa)) is 4 X approximate tandem repeats. Positions 741-752 (PQIQGQNNGNQS) are enriched in polar residues. A D-2 repeat occupies 745–782 (GQNNGNQSFEEDTEKDKPKYEQGGNIIDIDFDSVPQIH). Residues 783–821 (GFNKHNEIIEEDTNKDKPNYQFGGHNSVDFEEDTLPKVS) form a D-3 repeat. Over residues 786 to 800 (KHNEIIEEDTNKDKP) the composition is skewed to basic and acidic residues. A D-4; truncated repeat occupies 822 to 850 (GQNEGQQTIEEDTTPPTPPTPEVPSEPET). Over residues 836-910 (PPTPPTPEVP…PAEPGKPVPP (75 aa)) the composition is skewed to pro residues. WR repeat units follow at residues 851–864 (PTPPTPEVPSEPET), 865–878 (PTPPTPEVPSEPET), 879–892 (PTPPTPEVPSEPET), 893–906 (PTPPTPEVPAEPGK), and 907–920 (PVPPAEEEPKKPSK). Residues 851-920 (PTPPTPEVPS…AEEEPKKPSK (70 aa)) form a 5 X tandem repeats, Pro-rich (WR) region. Positions 954 to 958 (LPETG) match the LPXTG sorting signal motif. A Pentaglycyl murein peptidoglycan amidated threonine modification is found at threonine 957. The propeptide at 958 to 990 (GGEESTNKGMLFGGLFSILGLALLRRNKKNHKA) is removed by sortase.

Its subcellular location is the secreted. It is found in the cell wall. Its function is as follows. Promotes bacterial attachment to multiple substrates, such as fibronectin (Fn), fibrinogen (Fg), elastin peptides and tropoelastin. This confers to S.aureus the ability to invade endothelial cells. Promotes adherence to and aggregation of activated platelets. This Staphylococcus aureus (strain bovine RF122 / ET3-1) protein is Fibronectin-binding protein A (fnbA).